We begin with the raw amino-acid sequence, 138 residues long: MSGTLLAFDFGTKSIGVAIGQRITGTARALPAIKAQDGTPDWNIIERLLKEWQPDEIIVGLPLNMDGTEQPLTARARKFANRIHGRFGVLVTLHDERLSTIEARSGLFEQGGYRALNKGKVDSASAVIILESYFEQGY.

It belongs to the YqgF nuclease family.

It localises to the cytoplasm. Functionally, could be a nuclease involved in processing of the 5'-end of pre-16S rRNA. The chain is Putative pre-16S rRNA nuclease from Citrobacter koseri (strain ATCC BAA-895 / CDC 4225-83 / SGSC4696).